The following is a 426-amino-acid chain: NADH-quinone oxidoreductase subunit D 1 (426 aa).

The tract at residues 1 to 51 (MATEFTVPDSAARIATAQQAGGGTPVRSGPPDEGGEFSGDRMSLSMGPSHP) is disordered.

The protein belongs to the complex I 49 kDa subunit family. As to quaternary structure, NDH-1 is composed of 14 different subunits. Subunits NuoB, C, D, E, F, and G constitute the peripheral sector of the complex.

The protein localises to the cell inner membrane. The catalysed reaction is a quinone + NADH + 5 H(+)(in) = a quinol + NAD(+) + 4 H(+)(out). Its function is as follows. NDH-1 shuttles electrons from NADH, via FMN and iron-sulfur (Fe-S) centers, to quinones in the respiratory chain. The immediate electron acceptor for the enzyme in this species is believed to be ubiquinone. Couples the redox reaction to proton translocation (for every two electrons transferred, four hydrogen ions are translocated across the cytoplasmic membrane), and thus conserves the redox energy in a proton gradient. This is NADH-quinone oxidoreductase subunit D 1 from Opitutus terrae (strain DSM 11246 / JCM 15787 / PB90-1).